Reading from the N-terminus, the 345-residue chain is GDP-mannose transporter (345 aa).

Topologically, residues 1–8 are cytoplasmic; sequence MDNHMLNR. A helical membrane pass occupies residues 9–29; sequence ISKSPILPVVSYCMASILMTL. At 30–40 the chain is on the lumenal side; the sequence is TNKYVLSSPGY. A helical transmembrane segment spans residues 41–61; sequence NMNFLLLTVQSTVCVAAIGIL. Topologically, residues 62–78 are cytoplasmic; the sequence is KRLKVINYRDFDFREAK. The chain crosses the membrane as a helical span at residues 79 to 101; sequence FWFPISFLLVAMIYTASKALQFL. At 102–104 the chain is on the lumenal side; the sequence is SVP. The chain crosses the membrane as a helical span at residues 105-127; that stretch reads VYTIFKNLTIIIIAYGEVLWFGG. The Cytoplasmic portion of the chain corresponds to 128–131; that stretch reads HVTA. Residues 132–150 traverse the membrane as a helical segment; the sequence is LTLFSFGLMVLSSIVAAWA. The Lumenal portion of the chain corresponds to 151 to 161; sequence DIQSSSFASQT. A helical transmembrane segment spans residues 162-182; it reads LNSGYLWMVLNCLTNAAFVLA. Residues 183–194 lie on the Cytoplasmic side of the membrane; it reads MRKRIKLTNFRD. The helical transmembrane segment at 195-215 threads the bilayer; the sequence is FDTMFYNNLLSIPVLVICTLF. The Lumenal segment spans residues 216–233; it reads TEDWSAENIAQNFPPDAK. The helical transmembrane segment at 234-254 threads the bilayer; that stretch reads FGVLMAMAISGVSSVGISYTS. The Cytoplasmic segment spans residues 255-264; it reads AWCVRVTSST. The helical transmembrane segment at 265–285 threads the bilayer; the sequence is TYSMVGALNKLPLAIAGLVFF. Topologically, residues 286–288 are lumenal; that stretch reads DAP. A helical membrane pass occupies residues 289-309; the sequence is ITFGSVTAILLGFISGVVYAV. The Cytoplasmic portion of the chain corresponds to 310 to 345; the sequence is AKSQQQRQKDPATILPMTHNPVSASSQSMRDSLSKS. The segment at 319–345 is disordered; the sequence is DPATILPMTHNPVSASSQSMRDSLSKS. Over residues 329 to 345 the composition is skewed to polar residues; that stretch reads NPVSASSQSMRDSLSKS.

The protein belongs to the TPT transporter family. SLC35D subfamily. As to quaternary structure, homooligomer.

It is found in the golgi apparatus membrane. It localises to the cytoplasmic vesicle membrane. The protein localises to the endoplasmic reticulum membrane. In terms of biological role, involved in the import of GDP-mannose from the cytoplasm into the Golgi lumen. The sequence is that of GDP-mannose transporter (vrg4) from Schizosaccharomyces pombe (strain 972 / ATCC 24843) (Fission yeast).